A 469-amino-acid polypeptide reads, in one-letter code: 3-isopropylmalate dehydratase large subunit (469 aa).

[4Fe-4S] cluster contacts are provided by cysteine 350, cysteine 410, and cysteine 413.

This sequence belongs to the aconitase/IPM isomerase family. LeuC type 1 subfamily. In terms of assembly, heterodimer of LeuC and LeuD. [4Fe-4S] cluster is required as a cofactor.

The enzyme catalyses (2R,3S)-3-isopropylmalate = (2S)-2-isopropylmalate. Its pathway is amino-acid biosynthesis; L-leucine biosynthesis; L-leucine from 3-methyl-2-oxobutanoate: step 2/4. Catalyzes the isomerization between 2-isopropylmalate and 3-isopropylmalate, via the formation of 2-isopropylmaleate. This chain is 3-isopropylmalate dehydratase large subunit, found in Rhizobium johnstonii (strain DSM 114642 / LMG 32736 / 3841) (Rhizobium leguminosarum bv. viciae).